Here is a 1223-residue protein sequence, read N- to C-terminus: A disintegrin and metalloproteinase with thrombospondin motifs 14 (1223 aa).

A signal peptide spans 1-22 (MAPLRALLSYLLPLHCALCAAA). Positions 23–252 (GSRTPELHLS…QLGDTERKRR (230 aa)) are excised as a propeptide. N-linked (GlcNAc...) asparagine glycosylation occurs at Asn-109. In terms of domain architecture, Peptidase M12B spans 259–460 (YSIEVLLVVD…PSYDCLLDDP (202 aa)). Intrachain disulfides connect Cys-336–Cys-382, Cys-376–Cys-455, and Cys-415–Cys-441. Residue His-398 coordinates Zn(2+). Residue Glu-399 is part of the active site. The Zn(2+) site is built by His-402 and His-408. Positions 461-551 (FDPAWPQPPE…WKSPEQTYGQ (91 aa)) constitute a Disintegrin domain. Asn-475 carries N-linked (GlcNAc...) asparagine glycosylation. Disulfide bonds link Cys-482/Cys-507, Cys-493/Cys-516, Cys-502/Cys-535, Cys-529/Cys-540, Cys-564/Cys-601, Cys-568/Cys-606, and Cys-579/Cys-591. Positions 552–607 (DGGWSSWTKFGSCSRSCGGGVRSRSRSCNNPSPAYGGRLCLGPMFEYQVCNSEECP) constitute a TSP type-1 1 domain. The interval 730–846 (LKLVQIPAGA…GSNNVLLEEM (117 aa)) is spacer. 3 consecutive TSP type-1 domains span residues 847 to 907 (DTYE…HPCS), 908 to 967 (QPVW…LRVP), and 968 to 1022 (CPAQ…PACG). The N-linked (GlcNAc...) asparagine glycan is linked to Asn-941. 3 disulfide bridges follow: Cys-980/Cys-1016, Cys-984/Cys-1021, and Cys-995/Cys-1005. An N-linked (GlcNAc...) asparagine glycan is attached at Asn-1027. The 39-residue stretch at 1059 to 1097 (STEPCTGDRSVFCQMEVLDRYCSIPGYHRLCCVSCIKKA) folds into the PLAC domain. The disordered stretch occupies residues 1100–1223 (PNPGPDPGPT…TSLPAASPVT (124 aa)). Residues 1101–1125 (NPGPDPGPTSLPPFSTPGSPLPGPQ) show a composition bias toward pro residues. Residues 1199–1211 (PEDKGQPGEDLRH) show a composition bias toward basic and acidic residues.

In terms of processing, the precursor is cleaved by a furin endopeptidase. Post-translationally, glycosylated. Can be O-fucosylated by POFUT2 on a serine or a threonine residue found within the consensus sequence C1-X(2)-(S/T)-C2-G of the TSP type-1 repeat domains where C1 and C2 are the first and second cysteine residue of the repeat, respectively. Fucosylated repeats can then be further glycosylated by the addition of a beta-1,3-glucose residue by the glucosyltransferase, B3GALTL. Fucosylation mediates the efficient secretion of ADAMTS family members. Can also be C-glycosylated with one or two mannose molecules on tryptophan residues within the consensus sequence W-X-X-W of the TPRs, and N-glycosylated. These other glycosylations can also facilitate secretion. As to expression, expressed in retina and at low levels in brain, lung and placenta. High expression in fetal tissues.

It is found in the secreted. It localises to the extracellular space. Its subcellular location is the extracellular matrix. In terms of biological role, has aminoprocollagen type I processing activity in the absence of ADAMTS2. Seems to be synthesized as a latent enzyme that requires activation to display aminoprocollagen peptidase activity. Cleaves lysyl oxidase LOX at a site downstream of its propeptide cleavage site to produce a short LOX form. This chain is A disintegrin and metalloproteinase with thrombospondin motifs 14 (ADAMTS14), found in Homo sapiens (Human).